The following is a 609-amino-acid chain: Polyadenylate-binding protein 7 (609 aa).

RRM domains lie at 24–102 (ASLY…WSVR), 112–189 (GNVF…KFMK), 201–278 (TNLY…RAQK), and 304–381 (SNIY…IAQK). Residues 509–586 (EMKKSIQQRQ…AFEVLKSSKT (78 aa)) form the PABC domain.

The protein belongs to the polyadenylate-binding protein type-1 family. In terms of tissue distribution, expressed predominantly in siliques.

Its subcellular location is the cytoplasm. It is found in the nucleus. Its function is as follows. Binds the poly(A) tail of mRNA. Appears to be an important mediator of the multiple roles of the poly(A) tail in mRNA biogenesis, stability and translation. In Arabidopsis thaliana (Mouse-ear cress), this protein is Polyadenylate-binding protein 7 (PAB7).